The sequence spans 669 residues: DNA ligase (669 aa).

NAD(+) is bound by residues 33 to 37, 82 to 83, and glutamate 115; these read DVTYD and SL. The active-site N6-AMP-lysine intermediate is the lysine 117. NAD(+) is bound by residues arginine 138, glutamate 172, lysine 286, and lysine 310. The Zn(2+) site is built by cysteine 401, cysteine 404, cysteine 417, and cysteine 422. A BRCT domain is found at 589–669; that stretch reads VDSSFLFGKK…DIKNLVNLDD (81 aa).

Belongs to the NAD-dependent DNA ligase family. LigA subfamily. Mg(2+) serves as cofactor. The cofactor is Mn(2+).

It carries out the reaction NAD(+) + (deoxyribonucleotide)n-3'-hydroxyl + 5'-phospho-(deoxyribonucleotide)m = (deoxyribonucleotide)n+m + AMP + beta-nicotinamide D-nucleotide.. In terms of biological role, DNA ligase that catalyzes the formation of phosphodiester linkages between 5'-phosphoryl and 3'-hydroxyl groups in double-stranded DNA using NAD as a coenzyme and as the energy source for the reaction. It is essential for DNA replication and repair of damaged DNA. The protein is DNA ligase of Borrelia duttonii (strain Ly).